The following is a 633-amino-acid chain: Probable alkaline/neutral invertase A, chloroplastic (633 aa).

Residues 1 to 71 constitute a chloroplast transit peptide; the sequence is MNAITFLGNS…TNAVPFCTDR (71 aa). At S623 the chain carries Phosphoserine.

The protein belongs to the glycosyl hydrolase 100 family. In terms of tissue distribution, expressed in flowers.

The protein localises to the plastid. It is found in the chloroplast. The catalysed reaction is Hydrolysis of terminal non-reducing beta-D-fructofuranoside residues in beta-D-fructofuranosides.. In terms of biological role, chloroplastic invertase that cleaves sucrose into glucose and fructose and may participate in the carbon flux between the cytosol and plastids in leaves. This chain is Probable alkaline/neutral invertase A, chloroplastic, found in Arabidopsis thaliana (Mouse-ear cress).